Here is a 409-residue protein sequence, read N- to C-terminus: MEMEYIRVAEDENEEPMEIPSEDDGTVLLSTVTAQFPGACGLRYRNPVNQCMRGVRLVEGILHAPENGWGNLVYVVNYPKDNKRKMDETDASSAVKIKRAVTKTSDLIVLGLPWKTTEQDLKDYFSTFGEVIMVQVKKDAKTGHSKGFGFVRFADYETQVKVMSQRHMIDGRWCDCKLPNSKSPDEPMRSRKVFVGRCTEDMSAEELRQFFSQYGEVVDVFIPKPFRAFAFVTFADDQVAQSLCGEDLIIKGVSVHVSTAEPKHNNNRQLERGGRFPGPSFGNQGYPNSRPSSGALGNNQGGNMGGGGGMNFGAFSINPAMMAAAQAALQSSWGMMGMLASQQNQSGPQGSNQGQGNQQRDQPQSFGSNNSYGSNSGAIGWGSPNAGSGSGFNGGFSSSMESKSSGWGM.

2 consecutive RRM domains span residues 105–200 and 191–262; these read SDLI…RCTE and RKVF…TAEP. Disordered regions lie at residues 260–302 and 341–409; these read AEPK…NQGG and SQQN…GWGM. A compositionally biased stretch (basic and acidic residues) spans 261 to 274; the sequence is EPKHNNNRQLERGG. Residues 281–292 show a composition bias toward polar residues; that stretch reads FGNQGYPNSRPS. 2 stretches are compositionally biased toward low complexity: residues 341 to 387 and 395 to 409; these read SQQN…PNAG and GFSS…GWGM.

As to quaternary structure, homodimer.

The protein localises to the nucleus. It is found in the cytoplasm. It localises to the stress granule. Its subcellular location is the mitochondrion. Probably involved in transcriptional repression. May play a role in the maintenance of the circadian clock periodicity. The protein is TAR DNA-binding protein 43 (tardbp) of Xenopus tropicalis (Western clawed frog).